The sequence spans 982 residues: MAFAVWFLSTFVIVAAQRHMALEHEGTYNIGGVLTNSDSEEHFRTTIAHLNFDQQYVPRKVTYYEKTIRMDKNPIKTVFNVCNKLIEKRVYAVVVSHEQTSGDLSPAAVSYTSGFYSIPVIGISSRDAAFSDKNIHVSFLRTVPPYYHQADVWLEMLSHFSYTKVIIIHSSDTDGRAILGRFQTTSQTYYDDVDVRATVEMIVEFEPKLTSFSEHLTYMKTAQSRVYLMYASTEDAQIIFRDARDHNMTQEGHVWIVTEQALFANNTPEGVLGLQLEHAHSDKGHIRDSVYVLASAIKEMISNETIAEAPKDCGDSAVNWESGKRLFQYLKTRNITGETGQVAFDDNGDRIYAGYDVINIRENQKQHVVGKFSYDNMRAKMRMKINDSEIIWAGKQKRKPEGIMIPTHLKLLTIEEKPFVYVRRMGDDEFHCEPNERPCPLFNTTDATANEFCCSGYCIDLLIELAKRINFTYDLALSPDGQFGHYILRNNTGATLRKEWTGLIGQLVNERADMIVAPLTINPERAEYIEFSKPFKYQGITILEKKPSRSSTLVSFLQPFSNTLWILVMVSVHVVALVLYLLDRFSPFGRFKLSHSDSNEEKALNLSSAVWFAWGVLLNSGIGEGTPRSFSARVLGMVWAGFAMIIVASYTANLAAFLVLERPKTKLSGINDARLRNTMENLTCATVKGSSVDMYFRRQVELSNMYRTMEANNYATAEHAIQDVKKGKLMAFIWDSSRLEYEASKDCELVTAGELFGRSGYGIGLQKGSPWTDAVTLAILEFHESGFMEKLDKQWIFHGHVQQNCELFEKTPNTLGLKNMAGVFILVGVGIAGGVGLIIIEVIYKKHQVKKQKRLDIARHAADKWRGTIEKRKTIRASLAMQRQYNVGLNSRAPGTISLAVDKKRYPRLSQRMGPERAWPGDAAEVLRMRRPYEIGKPGQSPKVIGGPPHPMLGKTRPQAQQNLLPPRYSPGYTSDVSHLVV.

Residues 1–16 (MAFAVWFLSTFVIVAA) form the signal peptide. The Extracellular segment spans residues 17 to 561 (QRHMALEHEG…TLVSFLQPFS (545 aa)). 7 N-linked (GlcNAc...) asparagine glycosylation sites follow: Asn247, Asn303, Asn334, Asn386, Asn443, Asn470, and Asn490. Glycine contacts are provided by residues 518-520 (PLT) and Arg525. A helical membrane pass occupies residues 562–582 (NTLWILVMVSVHVVALVLYLL). The Cytoplasmic portion of the chain corresponds to 583–639 (DRFSPFGRFKLSHSDSNEEKALNLSSAVWFAWGVLLNSGIGEGTPRSFSARVLGMVW). The helical transmembrane segment at 640 to 660 (AGFAMIIVASYTANLAAFLVL) threads the bilayer. Residues 661 to 819 (ERPKTKLSGI…KTPNTLGLKN (159 aa)) are Extracellular-facing. Asn681 carries an N-linked (GlcNAc...) asparagine glycan. Glycine is bound by residues Ser691 and Asp735. Residues 820–840 (MAGVFILVGVGIAGGVGLIII) traverse the membrane as a helical segment. The Cytoplasmic portion of the chain corresponds to 841–982 (EVIYKKHQVK…YTSDVSHLVV (142 aa)). The disordered stretch occupies residues 934–982 (EIGKPGQSPKVIGGPPHPMLGKTRPQAQQNLLPPRYSPGYTSDVSHLVV). Residues 972–982 (GYTSDVSHLVV) are compositionally biased toward polar residues.

This sequence belongs to the glutamate-gated ion channel (TC 1.A.10.1) family. As to quaternary structure, forms a heteromeric NMDA channel with Nmdar2.

The protein resides in the cell membrane. The protein localises to the postsynaptic cell membrane. Its subcellular location is the postsynaptic density. Its function is as follows. NMDA receptor subtype of glutamate-gated ion channels with high calcium permeability and voltage-dependent sensitivity to magnesium. Mediated by glycine. This protein plays a key role in synaptic plasticity, synaptogenesis, excitotoxicity, memory acquisition and learning. It mediates neuronal functions in glutamate neurotransmission. Is involved in the cell surface targeting of NMDA receptors. Plays a role in associative learning and in long-term memory consolidation. The polypeptide is Glutamate [NMDA] receptor subunit 1 (Drosophila willistoni (Fruit fly)).